The following is a 424-amino-acid chain: Histidinol dehydrogenase (424 aa).

The NAD(+) site is built by tyrosine 127, glutamine 188, and asparagine 211. Substrate-binding residues include serine 234, glutamine 256, and histidine 259. The Zn(2+) site is built by glutamine 256 and histidine 259. Active-site proton acceptor residues include glutamate 322 and histidine 323. Substrate contacts are provided by histidine 323, aspartate 356, glutamate 410, and histidine 415. Residue aspartate 356 coordinates Zn(2+). Residue histidine 415 coordinates Zn(2+).

Belongs to the histidinol dehydrogenase family. It depends on Zn(2+) as a cofactor.

It carries out the reaction L-histidinol + 2 NAD(+) + H2O = L-histidine + 2 NADH + 3 H(+). It functions in the pathway amino-acid biosynthesis; L-histidine biosynthesis; L-histidine from 5-phospho-alpha-D-ribose 1-diphosphate: step 9/9. In terms of biological role, catalyzes the sequential NAD-dependent oxidations of L-histidinol to L-histidinaldehyde and then to L-histidine. The chain is Histidinol dehydrogenase from Methanococcus maripaludis (strain DSM 14266 / JCM 13030 / NBRC 101832 / S2 / LL).